A 468-amino-acid chain; its full sequence is MKLPEKLGPIHFIGIGGIGMSGIAEVMANLGYTVQGSDANDNANVRRLSENGIRTFVGHRAENVENAALVVVSTAIRRDNPELIEARERRLPVVRRAEMLAELMRFKSCVAVAGTHGKTTTTSLVATLLDAGNLDPTVINGGIINAYGTNARMGAGDWMVVEADESDGTFLKLPADVAIVTNIDPEHLDHFGSFDAIKDAFRRFIDNIPFYGFAVMCIDHPIVQDLVGHIEDRRIITYGENPQADVRLIDIDLKGGQSRFRVMIRDRRPGFRLEMQDLVLPMPGRHNALNATAALAVAHELGVSEDAIRKALAGFGGVKRRFTRTGEWNGAAIFDDYGHHPVEIAAVLRAARSSTDGKVIAVVQPHRYTRLQSLFEDFCTCFNDADTVIVAPVYAAGEAPIEGIDRDSLIAGLKARGHRDAVALERPEDLARLVSGRAEPNDYVVCLGAGTITQWAYALPGELAALKG.

Residue 114-120 participates in ATP binding; that stretch reads GTHGKTT.

Belongs to the MurCDEF family.

The protein localises to the cytoplasm. The catalysed reaction is UDP-N-acetyl-alpha-D-muramate + L-alanine + ATP = UDP-N-acetyl-alpha-D-muramoyl-L-alanine + ADP + phosphate + H(+). It participates in cell wall biogenesis; peptidoglycan biosynthesis. Its function is as follows. Cell wall formation. The chain is UDP-N-acetylmuramate--L-alanine ligase from Methylorubrum populi (strain ATCC BAA-705 / NCIMB 13946 / BJ001) (Methylobacterium populi).